The primary structure comprises 111 residues: Viscotoxin-A3 (111 aa).

The signal sequence occupies residues 1–26 (MEVVRGSSLVLLVLLLGALLVSQVES). Disulfide bonds link cysteine 29–cysteine 66, cysteine 30–cysteine 58, and cysteine 42–cysteine 52. A propeptide spans 73–111 (FYCTLGCESSQCATNSNGDAEAVRCKTACSDLCQDVDDA) (acidic domain).

This sequence belongs to the plant thionin (TC 1.C.44) family.

It is found in the secreted. Thionins are small plant proteins which are toxic to animal cells. They seem to exert their toxic effect at the level of the cell membrane. Their precise function is not known. This is Viscotoxin-A3 (THI2.1) from Viscum album (European mistletoe).